Here is a 333-residue protein sequence, read N- to C-terminus: UPF0285 protein MTH_1441 (333 aa).

Belongs to the UPF0285 family.

This Methanothermobacter thermautotrophicus (strain ATCC 29096 / DSM 1053 / JCM 10044 / NBRC 100330 / Delta H) (Methanobacterium thermoautotrophicum) protein is UPF0285 protein MTH_1441.